Here is a 600-residue protein sequence, read N- to C-terminus: UvrABC system protein C (600 aa).

One can recognise a GIY-YIG domain in the interval 15–100; that stretch reads NSAGVYQYFN…IKQLHPKYNI (86 aa). Residues 203-238 enclose the UVR domain; the sequence is SILIKNLEKQMLVLAQNENYEEAAKVRDQIVTIKDL.

Belongs to the UvrC family. In terms of assembly, interacts with UvrB in an incision complex.

It is found in the cytoplasm. In terms of biological role, the UvrABC repair system catalyzes the recognition and processing of DNA lesions. UvrC both incises the 5' and 3' sides of the lesion. The N-terminal half is responsible for the 3' incision and the C-terminal half is responsible for the 5' incision. The sequence is that of UvrABC system protein C from Campylobacter jejuni subsp. jejuni serotype O:6 (strain 81116 / NCTC 11828).